A 900-amino-acid chain; its full sequence is DNA mismatch repair protein MutS (900 aa).

Position 637–644 (637–644 (GPNMAGKS)) interacts with ATP.

Belongs to the DNA mismatch repair MutS family.

This protein is involved in the repair of mismatches in DNA. It is possible that it carries out the mismatch recognition step. This protein has a weak ATPase activity. The polypeptide is DNA mismatch repair protein MutS (Methanosarcina acetivorans (strain ATCC 35395 / DSM 2834 / JCM 12185 / C2A)).